Here is a 339-residue protein sequence, read N- to C-terminus: Alpha-N-dichloroacetyl-p-aminophenylserinol N-oxygenase (339 aa).

The span at 1-19 (MRDHTDEKSEAAGNDDGHV) shows a compositional bias: basic and acidic residues. The tract at residues 1 to 22 (MRDHTDEKSEAAGNDDGHVRIG) is disordered. Residues Glu-109, Glu-144, His-147, Glu-205, His-232, Glu-236, and His-239 each coordinate Fe cation.

Belongs to the AurF N-oxygenase family. Fe(2+) is required as a cofactor.

The catalysed reaction is alpha-N-dichloroacetyl-p-aminophenylserinol + AH2 + 2 O2 = chloramphenicol + A + 2 H2O. It functions in the pathway antibiotic biosynthesis. Involved in chloramphenicol biosynthesis. Catalyzes the six-electron oxidation of an aryl-amine precursor of chloramphenicol (NH2-CAM) to yield the aryl-nitro group of chloramphenicol (CAM). During catalysis, upon exposure of the diferrous cluster to O(2), ClmI forms an exceptionally long-lived peroxo intermediate (CmlI-peroxo), which reacts with NH2-CAM to form CAM. The polypeptide is Alpha-N-dichloroacetyl-p-aminophenylserinol N-oxygenase (Streptomyces venezuelae (strain ATCC 10712 / CBS 650.69 / DSM 40230 / JCM 4526 / NBRC 13096 / PD 04745)).